The following is a 445-amino-acid chain: Phosphoglucosamine mutase (445 aa).

The active-site Phosphoserine intermediate is Ser-99. Mg(2+) is bound by residues Ser-99, Asp-242, Asp-244, and Asp-246. Ser-99 carries the phosphoserine modification.

This sequence belongs to the phosphohexose mutase family. Requires Mg(2+) as cofactor. Activated by phosphorylation.

The catalysed reaction is alpha-D-glucosamine 1-phosphate = D-glucosamine 6-phosphate. Catalyzes the conversion of glucosamine-6-phosphate to glucosamine-1-phosphate. This chain is Phosphoglucosamine mutase, found in Helicobacter pylori (strain G27).